The sequence spans 366 residues: Alcohol dehydrogenase (366 aa).

Positions 41, 62, 63, and 167 each coordinate Zn(2+).

It belongs to the zinc-containing alcohol dehydrogenase family. Homotetramer. Requires Zn(2+) as cofactor.

It carries out the reaction a primary alcohol + NAD(+) = an aldehyde + NADH + H(+). The enzyme catalyses a secondary alcohol + NAD(+) = a ketone + NADH + H(+). The catalysed reaction is (R,R)-butane-2,3-diol + NAD(+) = (R)-acetoin + NADH + H(+). It catalyses the reaction an aldehyde + NAD(+) + H2O = a carboxylate + NADH + 2 H(+). Multifunctional alcohol dehydrogenase exhibiting NAD(+)-dependent dehydrogenase activities for 2,3-butanediol, ethanol and acetaldehyde, and reductase activities for acetoin (NADH-dependent), and diacetyl and acetaldehyde (independently of whether NADH or NADPH is the reductant). The rate of oxidation of 2,3-butanediol is much higher than for the oxidation of ethanol. Has acetaldehyde dehydrogenase activity leading to acetate formation. May function in the release of excess reducing power in the absence of exogenous hydrogen acceptors such as oxygen. This is Alcohol dehydrogenase (adh) from Cupriavidus necator (Alcaligenes eutrophus).